Consider the following 277-residue polypeptide: Ras suppressor protein 1 (277 aa).

Residues 1–23 are disordered; that stretch reads MSKSLKKLVEESREKNQPEVDMS. Serine 2 is modified (N-acetylserine). The segment covering 7-23 has biased composition (basic and acidic residues); it reads KLVEESREKNQPEVDMS. LRR repeat units lie at residues 41-63, 64-85, 87-109, 110-133, 135-156, 158-179, and 181-202; these read HITQLVLSHNKLTTVPPNIAELK, NLEVLNFFNNQIEELPTQISSL, KLKHLNLGMNRLNTLPRGFGSLP, ALEVLDLTYNNLNENSLPGNFFYL, TLRALYLSDNDFEILPPDIGKL, KLQILSLRDNDLISLPKEIGEL, and QLKELHIQGNRLTVLPPELGNL. The tract at residues 250–277 is disordered; it reads MQANPEPPKKNNDKSKKISRKPLAAKNK. Over residues 256–265 the composition is skewed to basic and acidic residues; it reads PPKKNNDKSK.

In terms of biological role, potentially plays a role in the Ras signal transduction pathway. Capable of suppressing v-Ras transformation in vitro. The polypeptide is Ras suppressor protein 1 (RSU1) (Bos taurus (Bovine)).